The primary structure comprises 275 residues: Multivesicular body subunit 12A (275 aa).

One can recognise an MABP domain in the interval 5–145; the sequence is STPITGLAWI…GLVFWCRKGS (141 aa). The SH3-binding signature appears at 151–156; the sequence is PTPKPR. In terms of domain architecture, UMA spans 216–267; sequence IDGIPFTIHPMFENTINNSSVAASDFRDLHIKTLSEIESEYNYGFVVEKTAA.

The protein belongs to the MVB12 family. In terms of assembly, component of the ESCRT-I complex (endosomal sorting complex required for transport I).

It localises to the cytoplasm. Its subcellular location is the endosome. It is found in the late endosome membrane. In terms of biological role, component of the ESCRT-I complex, a regulator of vesicular trafficking process. Required for the sorting of endocytic ubiquitinated cargos into multivesicular bodies. The polypeptide is Multivesicular body subunit 12A (mvb12a) (Xenopus laevis (African clawed frog)).